The sequence spans 89 residues: Small ribosomal subunit protein uS15 (89 aa).

It belongs to the universal ribosomal protein uS15 family. Part of the 30S ribosomal subunit. Forms a bridge to the 50S subunit in the 70S ribosome, contacting the 23S rRNA.

Its function is as follows. One of the primary rRNA binding proteins, it binds directly to 16S rRNA where it helps nucleate assembly of the platform of the 30S subunit by binding and bridging several RNA helices of the 16S rRNA. In terms of biological role, forms an intersubunit bridge (bridge B4) with the 23S rRNA of the 50S subunit in the ribosome. This chain is Small ribosomal subunit protein uS15, found in Chlorobaculum tepidum (strain ATCC 49652 / DSM 12025 / NBRC 103806 / TLS) (Chlorobium tepidum).